Here is a 109-residue protein sequence, read N- to C-terminus: Envelope small membrane protein (109 aa).

At 1 to 11 (MTNLLNKSLEE) the chain is on the virion surface side. Residues 12-32 (NGSFLTAVYIFVGFVALYLLG) traverse the membrane as a helical segment. Over 33–109 (RALQAFVQAA…QDVQRNKLYS (77 aa)) the chain is Intravirion. A disordered region spans residues 89–109 (NGWNNKNPANFQDVQRNKLYS). Positions 90-109 (GWNNKNPANFQDVQRNKLYS) are enriched in polar residues.

It belongs to the gammacoronaviruses E protein family. As to quaternary structure, homooligomer. Interacts with the M membrane protein in the budding compartment of the host cell, which is located between endoplasmic reticulum and the Golgi complex. The cytoplasmic tails of both proteins are important for this function. Interacts with Nucleoprotein.

The protein localises to the host Golgi apparatus membrane. Functionally, plays a central role in virus morphogenesis and assembly. Acts as a viroporin and self-assembles in host membranes forming pentameric protein-lipid pores that allow ion transport. Also plays a role in the induction of apoptosis. The protein is Envelope small membrane protein of Avian infectious bronchitis virus (strain KB8523) (IBV).